Here is a 525-residue protein sequence, read N- to C-terminus: Vesicular inhibitory amino acid transporter (525 aa).

The Cytoplasmic portion of the chain corresponds to 1-132 (MATLLRSKLT…WNVTNAIQGM (132 aa)). The helical transmembrane segment at 133–153 (FVLGLPYAILHGGYLGLFLII) threads the bilayer. The Lumenal, vesicle portion of the chain corresponds to 154 to 204 (FAAVVCCYTGKILIACLYEENEDGEVVRVRDSYVAIANACCAPRFPTLGGR). Y186 carries the 3'-nitrotyrosine modification. Residues 205-225 (VVNVAQIIELVMTCILYVVVS) form a helical membrane-spanning segment. At 226 to 265 (GNLMYNSFPGLPVSQKSWSIIATAVLLPCAFLKNLKAVSK) the chain is on the cytoplasmic side. Residues 266 to 286 (FSLLCTLAHFVINILVIAYCL) traverse the membrane as a helical segment. The Lumenal, vesicle portion of the chain corresponds to 287–305 (SRARDWAWEKVKFYIDVKK). The chain crosses the membrane as a helical span at residues 306-326 (FPISIGIIVFSYTSQIFLPSL). At 327-341 (EGNMQQPSEFHCMMN) the chain is on the cytoplasmic side. Residues 342–362 (WTHIAACVLKGLFALVAYLTW) form a helical membrane-spanning segment. The Lumenal, vesicle portion of the chain corresponds to 363–383 (ADETKEVITDNLPGSIRAVVN). Residues 384–404 (LFLVAKALLSYPLPFFAAVEV) traverse the membrane as a helical segment. Residues 405–438 (LEKSLFQEGSRAFFPACYGGDGRLKSWGLTLRCA) are Cytoplasmic-facing. A helical transmembrane segment spans residues 439 to 459 (LVVFTLLMAIYVPHFALLMGL). At 460–461 (TG) the chain is on the lumenal, vesicle side. A helical membrane pass occupies residues 462–482 (SLTGAGLCFLLPSLFHLRLLW). Topologically, residues 483–489 (RKLLWHQ) are cytoplasmic. A helical transmembrane segment spans residues 490–510 (VFFDVAIFVIGGICSVSGFVH). The Lumenal, vesicle segment spans residues 511-525 (SLEGLIEAYRTNAED).

It belongs to the amino acid/polyamine transporter 2 family. As to expression, brain and retina. Localized in horizontal cell tips at both rod and cone terminals.

The protein resides in the cytoplasmic vesicle membrane. It is found in the presynapse. It catalyses the reaction 4-aminobutanoate(out) + n H(+)(in) = 4-aminobutanoate(in) + n H(+)(out). The catalysed reaction is glycine(out) + n H(+)(in) = glycine(in) + n H(+)(out). It carries out the reaction beta-alanine(out) + n H(+)(in) = beta-alanine(in) + n H(+)(out). Its activity is regulated as follows. Chloride ions activate 4-aminobutanoate/H(+) transport. Functionally, antiporter that exchanges vesicular protons for cytosolic 4-aminobutanoate or to a lesser extend glycine, thus allowing their secretion from nerve terminals. The transport is equally dependent on the chemical and electrical components of the proton gradient. May also transport beta-alanine. Acidification of GABAergic synaptic vesicles is a prerequisite for 4-aminobutanoate uptake. This chain is Vesicular inhibitory amino acid transporter, found in Mus musculus (Mouse).